Here is a 393-residue protein sequence, read N- to C-terminus: Chorismate synthase (393 aa).

Residues Arg-48 and Arg-54 each coordinate NADP(+). FMN contacts are provided by residues 125-127, 238-239, Gly-278, 293-297, and Arg-319; these read RSS, NA, and KPTSS. Residues 355–393 form a disordered region; the sequence is ACTTPKIPGHTGPREGQEEGPSDSEPKVEFADDPEPDEA.

This sequence belongs to the chorismate synthase family. Homotetramer. It depends on FMNH2 as a cofactor.

It catalyses the reaction 5-O-(1-carboxyvinyl)-3-phosphoshikimate = chorismate + phosphate. It functions in the pathway metabolic intermediate biosynthesis; chorismate biosynthesis; chorismate from D-erythrose 4-phosphate and phosphoenolpyruvate: step 7/7. Catalyzes the anti-1,4-elimination of the C-3 phosphate and the C-6 proR hydrogen from 5-enolpyruvylshikimate-3-phosphate (EPSP) to yield chorismate, which is the branch point compound that serves as the starting substrate for the three terminal pathways of aromatic amino acid biosynthesis. This reaction introduces a second double bond into the aromatic ring system. This chain is Chorismate synthase, found in Nitrosospira multiformis (strain ATCC 25196 / NCIMB 11849 / C 71).